The primary structure comprises 742 residues: 5-methyltetrahydropteroyltriglutamate--homocysteine methyltransferase (742 aa).

5-methyltetrahydropteroyltri-L-glutamate is bound by residues 18–21 (REWK) and K112. L-homocysteine contacts are provided by residues 420-422 (IGS) and E473. Residues 420–422 (IGS) and E473 contribute to the L-methionine site. Position 550 (W550) interacts with 5-methyltetrahydropteroyltri-L-glutamate. D588 is an L-homocysteine binding site. D588 is an L-methionine binding site. Residue E594 participates in 5-methyltetrahydropteroyltri-L-glutamate binding. 3 residues coordinate Zn(2+): H630, C632, and E654. Residue H683 is the Proton donor of the active site. C715 provides a ligand contact to Zn(2+).

This sequence belongs to the vitamin-B12 independent methionine synthase family. Zn(2+) is required as a cofactor.

The enzyme catalyses 5-methyltetrahydropteroyltri-L-glutamate + L-homocysteine = tetrahydropteroyltri-L-glutamate + L-methionine. It functions in the pathway amino-acid biosynthesis; L-methionine biosynthesis via de novo pathway; L-methionine from L-homocysteine (MetE route): step 1/1. In terms of biological role, catalyzes the transfer of a methyl group from 5-methyltetrahydrofolate to homocysteine resulting in methionine formation. This Staphylococcus aureus (strain Mu3 / ATCC 700698) protein is 5-methyltetrahydropteroyltriglutamate--homocysteine methyltransferase.